The primary structure comprises 729 residues: Polyphosphate kinase (729 aa).

Residues 1–46 (MTEAQTRTEPSESSESSEAVAPAITSAADSAPEAPPATTAPAIENP) are disordered. Residues 25–42 (TSAADSAPEAPPATTAPA) show a composition bias toward low complexity. ATP is bound at residue Asn-90. The Mg(2+) site is built by Arg-422 and Arg-452. His-482 acts as the Phosphohistidine intermediate in catalysis. Positions 515, 611, and 639 each coordinate ATP.

It belongs to the polyphosphate kinase 1 (PPK1) family. Mg(2+) is required as a cofactor. In terms of processing, an intermediate of this reaction is the autophosphorylated ppk in which a phosphate is covalently linked to a histidine residue through a N-P bond.

It catalyses the reaction [phosphate](n) + ATP = [phosphate](n+1) + ADP. Catalyzes the reversible transfer of the terminal phosphate of ATP to form a long-chain polyphosphate (polyP). In Mycolicibacterium gilvum (strain PYR-GCK) (Mycobacterium gilvum (strain PYR-GCK)), this protein is Polyphosphate kinase.